Reading from the N-terminus, the 79-residue chain is Acyl carrier protein (79 aa).

Residues 3-78 (QEILEKVRSI…DAVSYIQEKK (76 aa)) enclose the Carrier domain. At Ser38 the chain carries O-(pantetheine 4'-phosphoryl)serine.

Belongs to the acyl carrier protein (ACP) family. In terms of processing, 4'-phosphopantetheine is transferred from CoA to a specific serine of apo-ACP by AcpS. This modification is essential for activity because fatty acids are bound in thioester linkage to the sulfhydryl of the prosthetic group.

It is found in the cytoplasm. It functions in the pathway lipid metabolism; fatty acid biosynthesis. Carrier of the growing fatty acid chain in fatty acid biosynthesis. The sequence is that of Acyl carrier protein from Synechococcus sp. (strain RCC307).